Here is a 210-residue protein sequence, read N- to C-terminus: Thiamine-phosphate synthase (210 aa).

4-amino-2-methyl-5-(diphosphooxymethyl)pyrimidine contacts are provided by residues 39–43 and asparagine 71; that span reads QLREK. The Mg(2+) site is built by aspartate 72 and aspartate 91. Serine 110 is a 4-amino-2-methyl-5-(diphosphooxymethyl)pyrimidine binding site. 134–136 contributes to the 2-[(2R,5Z)-2-carboxy-4-methylthiazol-5(2H)-ylidene]ethyl phosphate binding site; it reads TPT. Lysine 137 is a 4-amino-2-methyl-5-(diphosphooxymethyl)pyrimidine binding site. Glycine 163 provides a ligand contact to 2-[(2R,5Z)-2-carboxy-4-methylthiazol-5(2H)-ylidene]ethyl phosphate.

It belongs to the thiamine-phosphate synthase family. It depends on Mg(2+) as a cofactor.

The enzyme catalyses 2-[(2R,5Z)-2-carboxy-4-methylthiazol-5(2H)-ylidene]ethyl phosphate + 4-amino-2-methyl-5-(diphosphooxymethyl)pyrimidine + 2 H(+) = thiamine phosphate + CO2 + diphosphate. The catalysed reaction is 2-(2-carboxy-4-methylthiazol-5-yl)ethyl phosphate + 4-amino-2-methyl-5-(diphosphooxymethyl)pyrimidine + 2 H(+) = thiamine phosphate + CO2 + diphosphate. It catalyses the reaction 4-methyl-5-(2-phosphooxyethyl)-thiazole + 4-amino-2-methyl-5-(diphosphooxymethyl)pyrimidine + H(+) = thiamine phosphate + diphosphate. Its pathway is cofactor biosynthesis; thiamine diphosphate biosynthesis; thiamine phosphate from 4-amino-2-methyl-5-diphosphomethylpyrimidine and 4-methyl-5-(2-phosphoethyl)-thiazole: step 1/1. Functionally, condenses 4-methyl-5-(beta-hydroxyethyl)thiazole monophosphate (THZ-P) and 2-methyl-4-amino-5-hydroxymethyl pyrimidine pyrophosphate (HMP-PP) to form thiamine monophosphate (TMP). The chain is Thiamine-phosphate synthase from Campylobacter jejuni subsp. jejuni serotype O:6 (strain 81116 / NCTC 11828).